The chain runs to 1080 residues: Ubiquitin carboxyl-terminal hydrolase 8 (1080 aa).

Positions 33-116 constitute an MIT domain; sequence TKNYIHSAQK…ESLKLRYEEA (84 aa). A compositionally biased stretch (basic and acidic residues) spans 119–173; it reads RKQLEEKDRREEEQLQQQKRQEMGREDSGAAAKRSVENLLDSKTKTQRINGEKSE. The interval 119-176 is disordered; sequence RKQLEEKDRREEEQLQQQKRQEMGREDSGAAAKRSVENLLDSKTKTQRINGEKSEGAA. At Ser160 the chain carries Phosphoserine. The Rhodanese domain maps to 195–313; the sequence is KNTSLIIMDA…WLLCYPQFTT (119 aa). Over residues 379–393 the composition is skewed to low complexity; the sequence is ALAGPGAAPRAEASP. 3 disordered regions span residues 379-455, 468-605, and 642-710; these read ALAG…TDEE, EKNK…RSEE, and PPEM…KPPC. At Ser392 the chain carries Phosphoserine. An SH3-binding motif is present at residues 405-413; sequence PQVDRTKKP. Over residues 417–427 the composition is skewed to basic and acidic residues; the sequence is LPEDHRIKSEN. Ser446 carries the phosphoserine modification. Basic and acidic residues-rich tracts occupy residues 468–535, 549–577, and 593–605; these read EKNK…RELS, SKSE…KRPA, and AQRE…RSEE. Thr569 carries the post-translational modification Phosphothreonine. Residues 678–688 show a composition bias toward polar residues; that stretch reads SYSSPDITQAL. Phosphoserine occurs at positions 680 and 681. Residues 739–1071 form the USP domain; it reads TGLRNLGNTC…AAYILFYTSL (333 aa). Cys748 serves as the catalytic Nucleophile. Thr907 is modified (phosphothreonine). His1029 (proton acceptor) is an active-site residue.

Belongs to the peptidase C19 family. Forms a ternary complex with RNF128 and OTUB1. Interacts (via C-terminal UCH catalytic domain) with OTUB1 isoform 1. Interacts with STAM2 (via SH3 domain). Interacts with DNAJB3, EGFR, EPS15, RASGRF1, RNF41, YWHAE, YWHAG and YWHAZ. Interacts with NBR1, RASGRF1, RNF41 and IST1. Associates with the ESCRT-0 complex and with microtubules. Interacts with BIRC6/bruce and KIF23/MKLP1. Phosphorylation of Ser-680 is essential for interaction with YWHAE and for cytosol localization. Undergoes dephosphorylation at Ser-680 in the M phase. Tyrosine-phosphorylated in its N-terminal half in an EGFR-dependent manner. Post-translationally, ubiquitinated. Inactive form is mostly monoubiquitinated, but polyubiquitination happens too. Ubiquitination is increased in EGF-stimulated cells. Ubiquitination of active form is undetectable, suggesting a possibility that USP8 deubiquitinates itself, thereby regulating its own function. In terms of tissue distribution, highly expressed in testis. Expressed at intermediate level in brain.

Its subcellular location is the cytoplasm. It localises to the nucleus. It is found in the endosome membrane. The protein resides in the cell membrane. The enzyme catalyses Thiol-dependent hydrolysis of ester, thioester, amide, peptide and isopeptide bonds formed by the C-terminal Gly of ubiquitin (a 76-residue protein attached to proteins as an intracellular targeting signal).. Hydrolase that can remove conjugated ubiquitin from proteins and therefore plays an important regulatory role at the level of protein turnover by preventing degradation. Converts both 'Lys-48' an 'Lys-63'-linked ubiquitin chains. Catalytic activity is enhanced in the M phase. Involved in cell proliferation. Required to enter into S phase in response to serum stimulation. May regulate T-cell anergy mediated by RNF128 via the formation of a complex containing RNF128 and OTUB1. Probably regulates the stability of STAM2 and RASGRF1. Regulates endosomal ubiquitin dynamics, cargo sorting, membrane traffic at early endosomes, and maintenance of ESCRT-0 stability. The level of protein ubiquitination on endosomes is essential for maintaining the morphology of the organelle. Deubiquitinates EPS15 and controls tyrosine kinase stability. Removes conjugated ubiquitin from EGFR thus regulating EGFR degradation and downstream MAPK signaling. Involved in acrosome biogenesis through interaction with the spermatid ESCRT-0 complex and microtubules. Deubiquitinates BIRC6/bruce and KIF23/MKLP1. Deubiquitinates BACE1 which inhibits BACE1 lysosomal degradation and modulates BACE-mediated APP cleavage and amyloid-beta formation. In Mus musculus (Mouse), this protein is Ubiquitin carboxyl-terminal hydrolase 8.